The primary structure comprises 458 residues: Mannan endo-1,6-alpha-mannosidase DFG5 (458 aa).

The first 26 residues, 1–26 (MIVNISAKMILSICFTFLSFFKATHA), serve as a signal peptide directing secretion. N-linked (GlcNAc...) asparagine glycosylation is found at Asn-89, Asn-114, Asn-138, Asn-208, Asn-231, Asn-245, Asn-270, Asn-273, and Asn-417. The tract at residues 399–418 (PYKEDNGGTSKGDANAGMNS) is disordered. Residue Gly-437 is the site of GPI-anchor amidated glycine attachment. Residues 438-458 (AAIITAVILSVLTGGAVWMLF) constitute a propeptide, removed in mature form.

Belongs to the glycosyl hydrolase 76 family. N-glycosylated.

The protein resides in the cell membrane. The enzyme catalyses Random hydrolysis of (1-&gt;6)-alpha-D-mannosidic linkages in unbranched (1-&gt;6)-mannans.. Required for normal synthesis of the cell wall. The chain is Mannan endo-1,6-alpha-mannosidase DFG5 (DFG5) from Saccharomyces cerevisiae (strain ATCC 204508 / S288c) (Baker's yeast).